The primary structure comprises 366 residues: Patr class I histocompatibility antigen, C alpha chain (366 aa).

A signal peptide spans Met1–Ala24. The interval Gly25–Asp114 is alpha-1. The Extracellular portion of the chain corresponds to Gly25 to Ile308. A glycan (N-linked (GlcNAc...) asparagine) is linked at Asn110. The alpha-2 stretch occupies residues Gly115 to Thr206. Intrachain disulfides connect Cys125-Cys192 and Cys227-Cys283. Positions Glu207 to Trp298 are alpha-3. Positions Pro209–Arg297 constitute an Ig-like C1-type domain. The interval Lys299–Ile308 is connecting peptide. Residues Val309–Met332 traverse the membrane as a helical segment. Over Cys333 to Ala366 the chain is Cytoplasmic. Ser357 and Ser360 each carry phosphoserine.

The protein belongs to the MHC class I family. Heterodimer of an alpha chain and a beta chain (beta-2-microglobulin).

It localises to the membrane. Its function is as follows. Involved in the presentation of foreign antigens to the immune system. In Pan troglodytes (Chimpanzee), this protein is Patr class I histocompatibility antigen, C alpha chain.